The primary structure comprises 1504 residues: DNA-directed RNA polymerase subunit beta' (1504 aa).

Positions 60, 62, 75, and 78 each coordinate Zn(2+). Residues 265-294 (RKQRDLEDAEQLTGAERERKEYEASQERER) form a disordered region. Residues 279 to 294 (AERERKEYEASQERER) are compositionally biased toward basic and acidic residues. Residues aspartate 626, aspartate 628, and aspartate 630 each coordinate Mg(2+). Zn(2+) is bound by residues cysteine 1002, cysteine 1075, cysteine 1082, and cysteine 1085. The interval 1468–1504 (RALIGGDGDDGERNNGDFDDQVGEDVVIPPDDDDQEA) is disordered.

The protein belongs to the RNA polymerase beta' chain family. The RNAP catalytic core consists of 2 alpha, 1 beta, 1 beta' and 1 omega subunit. When a sigma factor is associated with the core the holoenzyme is formed, which can initiate transcription. Mg(2+) serves as cofactor. It depends on Zn(2+) as a cofactor.

The catalysed reaction is RNA(n) + a ribonucleoside 5'-triphosphate = RNA(n+1) + diphosphate. Its function is as follows. DNA-dependent RNA polymerase catalyzes the transcription of DNA into RNA using the four ribonucleoside triphosphates as substrates. This Roseiflexus sp. (strain RS-1) protein is DNA-directed RNA polymerase subunit beta'.